The sequence spans 102 residues: NADH-quinone oxidoreductase subunit K (102 aa).

The next 3 membrane-spanning stretches (helical) occupy residues 5 to 25 (ITHY…GIFL), 31 to 51 (IIIL…FVAF), and 66 to 86 (FILT…VVFF).

It belongs to the complex I subunit 4L family. In terms of assembly, NDH-1 is composed of 14 different subunits. Subunits NuoA, H, J, K, L, M, N constitute the membrane sector of the complex.

It localises to the cell inner membrane. The enzyme catalyses a quinone + NADH + 5 H(+)(in) = a quinol + NAD(+) + 4 H(+)(out). Its function is as follows. NDH-1 shuttles electrons from NADH, via FMN and iron-sulfur (Fe-S) centers, to quinones in the respiratory chain. The immediate electron acceptor for the enzyme in this species is believed to be ubiquinone. Couples the redox reaction to proton translocation (for every two electrons transferred, four hydrogen ions are translocated across the cytoplasmic membrane), and thus conserves the redox energy in a proton gradient. The polypeptide is NADH-quinone oxidoreductase subunit K (Bartonella quintana (strain Toulouse) (Rochalimaea quintana)).